The chain runs to 345 residues: UDP-3-O-acylglucosamine N-acyltransferase (345 aa).

The active-site Proton acceptor is His-239.

Belongs to the transferase hexapeptide repeat family. LpxD subfamily. In terms of assembly, homotrimer.

It catalyses the reaction a UDP-3-O-[(3R)-3-hydroxyacyl]-alpha-D-glucosamine + a (3R)-hydroxyacyl-[ACP] = a UDP-2-N,3-O-bis[(3R)-3-hydroxyacyl]-alpha-D-glucosamine + holo-[ACP] + H(+). The protein operates within bacterial outer membrane biogenesis; LPS lipid A biosynthesis. Catalyzes the N-acylation of UDP-3-O-acylglucosamine using 3-hydroxyacyl-ACP as the acyl donor. Is involved in the biosynthesis of lipid A, a phosphorylated glycolipid that anchors the lipopolysaccharide to the outer membrane of the cell. The polypeptide is UDP-3-O-acylglucosamine N-acyltransferase (Geobacter metallireducens (strain ATCC 53774 / DSM 7210 / GS-15)).